Here is an 89-residue protein sequence, read N- to C-terminus: Small ribosomal subunit protein uS17 (89 aa).

This sequence belongs to the universal ribosomal protein uS17 family. As to quaternary structure, part of the 30S ribosomal subunit.

Its function is as follows. One of the primary rRNA binding proteins, it binds specifically to the 5'-end of 16S ribosomal RNA. This chain is Small ribosomal subunit protein uS17, found in Chlorobaculum tepidum (strain ATCC 49652 / DSM 12025 / NBRC 103806 / TLS) (Chlorobium tepidum).